The primary structure comprises 420 residues: UDP-N-acetylglucosamine 1-carboxyvinyltransferase (420 aa).

Residue 23 to 24 (KN) participates in phosphoenolpyruvate binding. UDP-N-acetyl-alpha-D-glucosamine is bound at residue Arg-92. Cys-116 (proton donor) is an active-site residue. Cys-116 carries the 2-(S-cysteinyl)pyruvic acid O-phosphothioketal modification. Residues 121–125 (RPVDL), 161–164 (KVSV), Asp-306, and Ile-328 each bind UDP-N-acetyl-alpha-D-glucosamine.

The protein belongs to the EPSP synthase family. MurA subfamily.

The protein localises to the cytoplasm. It catalyses the reaction phosphoenolpyruvate + UDP-N-acetyl-alpha-D-glucosamine = UDP-N-acetyl-3-O-(1-carboxyvinyl)-alpha-D-glucosamine + phosphate. It participates in cell wall biogenesis; peptidoglycan biosynthesis. Its function is as follows. Cell wall formation. Adds enolpyruvyl to UDP-N-acetylglucosamine. The chain is UDP-N-acetylglucosamine 1-carboxyvinyltransferase from Photobacterium profundum (strain SS9).